The primary structure comprises 95 residues: Ribosome-binding factor A (95 aa).

Belongs to the RbfA family. Interacts with the 30S ribosomal subunit as a monomer, binding in a position overlapping the sites of the A and P site tRNAs, and displacing segments of the 16S rRNA. Probably contacts 16S rRNA and ribosomal protein S9 and S13.

The protein resides in the cytoplasm. Functionally, one of several proteins that assist in the late maturation steps of the functional core of the 30S ribosomal subunit. Associates with free 30S ribosomal subunits (but not with 30S subunits that are part of 70S ribosomes or polysomes). Required for efficient processing of 16S rRNA. Probably interacts with the 5'-terminal helix region of 16S rRNA, bringing together different domains of the 30S ribosomal subunit which aids assembly. This is Ribosome-binding factor A from Thermus thermophilus (strain ATCC 27634 / DSM 579 / HB8).